Reading from the N-terminus, the 53-residue chain is UPF0391 membrane protein ESA_03375 (53 aa).

2 helical membrane-spanning segments follow: residues 4–24 (WGII…GGLA) and 28–48 (AGAA…SLFM).

Belongs to the UPF0391 family.

The protein localises to the cell membrane. In Cronobacter sakazakii (strain ATCC BAA-894) (Enterobacter sakazakii), this protein is UPF0391 membrane protein ESA_03375.